A 319-amino-acid polypeptide reads, in one-letter code: Peroxidase 13 (319 aa).

An N-terminal signal peptide occupies residues 1 to 22 (MITIALFLVLLYFHDQLGYSAA). 4 disulfides stabilise this stretch: Cys-33-Cys-111, Cys-66-Cys-71, Cys-117-Cys-315, and Cys-196-Cys-222. His-64 (proton acceptor) is an active-site residue. Asp-65, Val-68, Gly-70, Asp-72, and Ser-74 together coordinate Ca(2+). Pro-158 serves as a coordination point for substrate. His-189 is a heme b binding site. Thr-190 serves as a coordination point for Ca(2+). Ca(2+) is bound by residues Asp-235, Ser-238, and Asp-243. N-linked (GlcNAc...) asparagine glycosylation is present at Asn-280.

Belongs to the peroxidase family. Classical plant (class III) peroxidase subfamily. Heme b serves as cofactor. Requires Ca(2+) as cofactor.

Its subcellular location is the secreted. It catalyses the reaction 2 a phenolic donor + H2O2 = 2 a phenolic radical donor + 2 H2O. In terms of biological role, removal of H(2)O(2), oxidation of toxic reductants, biosynthesis and degradation of lignin, suberization, auxin catabolism, response to environmental stresses such as wounding, pathogen attack and oxidative stress. These functions might be dependent on each isozyme/isoform in each plant tissue. In Arabidopsis thaliana (Mouse-ear cress), this protein is Peroxidase 13 (PER13).